The sequence spans 486 residues: NADH-quinone oxidoreductase subunit N (486 aa).

Helical transmembrane passes span 14–34, 45–65, 77–97, 105–125, 130–150, 163–183, 203–223, 237–257, 268–288, 299–319, 326–346, 377–397, 409–429, and 459–479; these read SIAPMMVLSLFAVFILVLNFI, MLAILGLAINIFFLFGYSGIV, FAFISMIIILLFSILFLPLTL, CSLAEFYALYLFMIVGYEFMV, LIVILVGLETSSLALYTLIAL, YFTMGALSTGFFCFAIVIFYL, ILIATACIFLICSIGFKLSLI, SEVMAGYISIVPKIAGFIVAM, IAFIQISLYIIAVLTMTLANI, MLAFSSISHAGFVLCAVVIGT, LFLYWLMFSFANLGAFSVLWF, FLMALFMISLAGIPPFSVFWG, GFIFMAVIMAINSAIAVYYYL, and FIITFSAILCILAPFMVKFWT.

Belongs to the complex I subunit 2 family. In terms of assembly, NDH-1 is composed of 14 different subunits. Subunits NuoA, H, J, K, L, M, N constitute the membrane sector of the complex.

Its subcellular location is the cell inner membrane. The catalysed reaction is a quinone + NADH + 5 H(+)(in) = a quinol + NAD(+) + 4 H(+)(out). Functionally, NDH-1 shuttles electrons from NADH, via FMN and iron-sulfur (Fe-S) centers, to quinones in the respiratory chain. The immediate electron acceptor for the enzyme in this species is believed to be ubiquinone. Couples the redox reaction to proton translocation (for every two electrons transferred, four hydrogen ions are translocated across the cytoplasmic membrane), and thus conserves the redox energy in a proton gradient. This Campylobacter hominis (strain ATCC BAA-381 / DSM 21671 / CCUG 45161 / LMG 19568 / NCTC 13146 / CH001A) protein is NADH-quinone oxidoreductase subunit N.